Reading from the N-terminus, the 487-residue chain is MAQPRYDDGLHGYGMDSGAAAAAMYDPHAGHRPPGLQGLPSHHSPHMTHAAAAAATVGMHGYHSGAGGHGTPSHVSPVGNHLMGAIPEVHKRDKDAIYEHPLFPLLALIFEKCELATCTPREPGVQGGDVCSSESFNEDIAMFSKQIRSQKPYYTADPEVDSLMVQAIQVLRFHLLELEKVHELCDNFCHRYISCLKGKMPIDLVIDERDTTKPPELGSANGEGRSNADSTSHTDGASTPDVRPPSSSLSYGGAMNDDARSPGAGSTPGPLSQQPPALDTSDPDGKFLSSLNPSELTYDGRWCRREWSSPADARNADASRRLYSSVFLGSPDNFGTSASGDASNASIGSGEGTGEEDDDASGKKNQKKRGIFPKVATNILRAWLFQHLTHPYPSEDQKKQLAQDTGLTILQVNNWFINARRRIVQPMIDQSNRAVYTPHPGPSGYGHDAMGYMMDSQAHMMHRPPGDPGFHQGYPHYPPAEYYGQHL.

Disordered stretches follow at residues 25–49 (YDPH…HMTH), 210–292 (DTTK…SSLN), and 333–369 (NFGT…QKKR). Positions 127 to 211 (GGDVCSSESF…IDLVIDERDT (85 aa)) constitute an MEIS N-terminal domain. Polar residues-rich tracts occupy residues 227–237 (NADSTSHTDGA) and 333–345 (NFGT…ASNA). The segment at residues 365–427 (NQKKRGIFPK…NARRRIVQPM (63 aa)) is a DNA-binding region (homeobox; TALE-type).

This sequence belongs to the TALE/MEIS homeobox family. In terms of assembly, interacts with exd; required for nuclear translocation of exd. In the wing disk, the expression is present in the regions corresponding to notum, wing hinge and ventral pleura. In the leg disk, the expression is in the periphery region, corresponding to the proximal segments of the legs. In the antennal disk, the expression is in all but the arista region. In the eye disk, the expression is strong in the anterior region surrounding the eye field, including the regions corresponding to ptilinum, ocellus and head capsules, and weak in the posterior and lateral margins of the eye disk. Expressed specifically in maturating inner photoreceptors of the DRA and maintained through adulthood.

It is found in the nucleus. In terms of biological role, all isoforms are required for patterning of the embryonic cuticle. Acts with exd to delimit the eye field and prevent inappropriate eye development. Isoforms that carry the homeodomain are required for proper localization of chordotonal organs within the peripheral nervous system and antennal identity; required to activate antennal-specific genes, such as sal and to repress the leg-like expression of dac. Necessary for the nuclear localization of the essential HOX cofactor, extradenticle (exd). Both necessary and sufficient for inner photoreceptors to adopt the polarization-sensitive 'dorsal rim area' (DRA) of the eye fate instead of the color-sensitive default state. This occurs by increasing rhabdomere size and uncoupling R7-R8 communication to allow both cells to express the same opsin rather than different ones as required for color vision. This Drosophila melanogaster (Fruit fly) protein is Homeobox protein homothorax.